The primary structure comprises 147 residues: Hemoglobin subunit epsilon (147 aa).

The Globin domain occupies 3–147 (HFTAEEKSTI…VATALAHKYH (145 aa)). Phosphoserine occurs at positions 14 and 51. The heme b site is built by His-64 and His-93.

This sequence belongs to the globin family. As to quaternary structure, heterotetramer of two alpha chains and two epsilon chains in early embryonic hemoglobin Gower-2; two zeta chains and two epsilon chains in early embryonic hemoglobin Gower-1. Red blood cells.

In terms of biological role, the epsilon chain is a beta-type chain of early mammalian embryonic hemoglobin. In Propithecus verreauxi (White sifaka), this protein is Hemoglobin subunit epsilon (HBE1).